The primary structure comprises 165 residues: Large ribosomal subunit protein uL10 (165 aa).

This sequence belongs to the universal ribosomal protein uL10 family. In terms of assembly, part of the ribosomal stalk of the 50S ribosomal subunit. The N-terminus interacts with L11 and the large rRNA to form the base of the stalk. The C-terminus forms an elongated spine to which L12 dimers bind in a sequential fashion forming a multimeric L10(L12)X complex.

In terms of biological role, forms part of the ribosomal stalk, playing a central role in the interaction of the ribosome with GTP-bound translation factors. This is Large ribosomal subunit protein uL10 from Cronobacter sakazakii (strain ATCC BAA-894) (Enterobacter sakazakii).